The primary structure comprises 64 residues: Large ribosomal subunit protein bL35 (64 aa).

Basic residues predominate over residues 1-42 (MPKAKTHSGASKRFRRTGTGKIVRQKANRRHLLEHKPTKRTR). The tract at residues 1–64 (MPKAKTHSGA…NSRINKLLNG (64 aa)) is disordered. The segment covering 48 to 58 (TTVSAADNSRI) has biased composition (polar residues).

Belongs to the bacterial ribosomal protein bL35 family.

This is Large ribosomal subunit protein bL35 from Mycolicibacterium smegmatis (strain ATCC 700084 / mc(2)155) (Mycobacterium smegmatis).